The sequence spans 223 residues: Urease accessory protein UreF (223 aa).

Belongs to the UreF family. In terms of assembly, ureD, UreF and UreG form a complex that acts as a GTP-hydrolysis-dependent molecular chaperone, activating the urease apoprotein by helping to assemble the nickel containing metallocenter of UreC. The UreE protein probably delivers the nickel.

It localises to the cytoplasm. In terms of biological role, required for maturation of urease via the functional incorporation of the urease nickel metallocenter. The protein is Urease accessory protein UreF of Paenarthrobacter aurescens (strain TC1).